A 219-amino-acid polypeptide reads, in one-letter code: Ribosome maturation factor RimP (219 aa).

Residues 195–219 (EGRIPGDDLGAEPEDVASTETQEKK) are disordered.

This sequence belongs to the RimP family.

Its subcellular location is the cytoplasm. Required for maturation of 30S ribosomal subunits. This chain is Ribosome maturation factor RimP, found in Brucella abortus (strain S19).